Consider the following 292-residue polypeptide: Oxidative stress-responsive serine-rich protein 1 (292 aa).

The interval 27–175 (SIASLSVGEG…SSDATQVSQA (149 aa)) is disordered. The segment covering 65 to 83 (STRKSSRGVVRTQRRRRSK) has biased composition (basic residues). Threonine 143 and threonine 233 each carry phosphothreonine.

In Pongo abelii (Sumatran orangutan), this protein is Oxidative stress-responsive serine-rich protein 1 (OSER1).